The sequence spans 303 residues: N-acetyl-D-glucosamine kinase (303 aa).

Residues 4–11 (GFDIGGTK) and 133–140 (GVGGGLVL) contribute to the ATP site. Zn(2+)-binding residues include histidine 157, cysteine 177, cysteine 179, and cysteine 184.

This sequence belongs to the ROK (NagC/XylR) family. NagK subfamily.

It carries out the reaction N-acetyl-D-glucosamine + ATP = N-acetyl-D-glucosamine 6-phosphate + ADP + H(+). It participates in cell wall biogenesis; peptidoglycan recycling. Functionally, catalyzes the phosphorylation of N-acetyl-D-glucosamine (GlcNAc) derived from cell-wall degradation, yielding GlcNAc-6-P. The chain is N-acetyl-D-glucosamine kinase from Citrobacter koseri (strain ATCC BAA-895 / CDC 4225-83 / SGSC4696).